The sequence spans 105 residues: Intracellular chorismate mutase (105 aa).

The 83-residue stretch at 23–105 (SQPVPEIDTL…LRLGRGRLGH (83 aa)) folds into the Chorismate mutase domain. The chorismate site is built by Arg-61, Val-70, and Glu-74.

Homodimer. Interacts with AroG.

It localises to the cytoplasm. It carries out the reaction chorismate = prephenate. It functions in the pathway metabolic intermediate biosynthesis; prephenate biosynthesis; prephenate from chorismate: step 1/1. With respect to regulation, the formation of the complex with AroG activates the chorismate mutase activity. Its function is as follows. Catalyzes the Claisen rearrangement of chorismate to prephenate. Probably involved in the aromatic amino acid biosynthesis. This Mycobacterium bovis (strain ATCC BAA-935 / AF2122/97) protein is Intracellular chorismate mutase.